The sequence spans 488 residues: MWENKFAKESLTFDDVLLIPAASDVLPNDADLSVELSERIKLNIPVISAGMDTVTESKMAIAMARQGGLGVIHKNMGIEEQAEEVQKVKRSENGVITNPFYLTPDESVYEAEALMGKYRISGVPIVSDKESRELVGILTNRDLRFIEDFSIKISDVMTKENLITAPVGTTLDEAETILQEHKIEKLPLVENGRLEGLITIKDIEKVLEFPHAAKDAHGRLLAAAAIGTSKDTEIRAQKLVEAGVDALIIDTAHGHSSGVIQEVKKMKEKYPEITIVAGNVATAEATRALFEAGADVVKVGIGPGSICTTRVVAGVGVPQITAIYDCATEARKFGKAIIADGGIKFSGDIIKALAAGGHAVMLGSLLAGTEESPGATEVFQGRQYKVYRGMGSLGAMEKGSNDRYFQEDKTPRKFVPEGIEGRTAYKGPLQDTIYQLMGGVRAGMGYTGSPDLKTLRDEAQFTRMGPAGLAESHPHNVQITKESPNYSF.

CBS domains lie at 95–153 and 157–213; these read VITN…SIKI and MTKE…PHAA. Residues Asp-250 and 300–302 each bind NAD(+); that span reads GIG. Positions 302 and 304 each coordinate K(+). Ser-305 is a binding site for IMP. Cys-307 is a binding site for K(+). Residue Cys-307 is the Thioimidate intermediate of the active site. Residues 340–342, 363–364, and 387–391 contribute to the IMP site; these read DGG, GS, and YRGMG. The active-site Proton acceptor is the Arg-403. Glu-417 provides a ligand contact to IMP. Positions 467–488 are disordered; the sequence is AGLAESHPHNVQITKESPNYSF. Glu-471, Ser-472, and His-473 together coordinate K(+). The segment covering 475–488 has biased composition (polar residues); the sequence is HNVQITKESPNYSF.

This sequence belongs to the IMPDH/GMPR family. Homotetramer. The cofactor is K(+).

The catalysed reaction is IMP + NAD(+) + H2O = XMP + NADH + H(+). It participates in purine metabolism; XMP biosynthesis via de novo pathway; XMP from IMP: step 1/1. With respect to regulation, mycophenolic acid (MPA) is a non-competitive inhibitor that prevents formation of the closed enzyme conformation by binding to the same site as the amobile flap. In contrast, mizoribine monophosphate (MZP) is a competitive inhibitor that induces the closed conformation. MPA is a potent inhibitor of mammalian IMPDHs but a poor inhibitor of the bacterial enzymes. MZP is a more potent inhibitor of bacterial IMPDH. Its function is as follows. Catalyzes the conversion of inosine 5'-phosphate (IMP) to xanthosine 5'-phosphate (XMP), the first committed and rate-limiting step in the de novo synthesis of guanine nucleotides, and therefore plays an important role in the regulation of cell growth. This chain is Inosine-5'-monophosphate dehydrogenase, found in Staphylococcus haemolyticus (strain JCSC1435).